A 399-amino-acid chain; its full sequence is Phosphoglycerate kinase (399 aa).

Substrate is bound by residues 22–24 (DLN), Arg37, 60–63 (HFGR), Arg119, and Arg152. Residues Lys202, Glu324, and 354 to 357 (GGDT) contribute to the ATP site.

Belongs to the phosphoglycerate kinase family. Monomer.

Its subcellular location is the cytoplasm. It catalyses the reaction (2R)-3-phosphoglycerate + ATP = (2R)-3-phospho-glyceroyl phosphate + ADP. It functions in the pathway carbohydrate degradation; glycolysis; pyruvate from D-glyceraldehyde 3-phosphate: step 2/5. This is Phosphoglycerate kinase from Sinorhizobium medicae (strain WSM419) (Ensifer medicae).